Reading from the N-terminus, the 205-residue chain is Probable GTP-binding protein EngB (205 aa).

Residues Gln-29–Ser-203 form the EngB-type G domain. GTP contacts are provided by residues Gly-37–Ser-44, Gly-64–Met-68, Asp-82–Gly-85, Thr-149–Asp-152, and Phe-182–Ser-184. Positions 44 and 66 each coordinate Mg(2+).

It belongs to the TRAFAC class TrmE-Era-EngA-EngB-Septin-like GTPase superfamily. EngB GTPase family. Requires Mg(2+) as cofactor.

Functionally, necessary for normal cell division and for the maintenance of normal septation. This chain is Probable GTP-binding protein EngB, found in Coxiella burnetii (strain RSA 493 / Nine Mile phase I).